The sequence spans 249 residues: 1-(5-phosphoribosyl)-5-[(5-phosphoribosylamino)methylideneamino] imidazole-4-carboxamide isomerase (249 aa).

Asp11 functions as the Proton acceptor in the catalytic mechanism. Asp133 (proton donor) is an active-site residue.

It belongs to the HisA/HisF family.

The protein resides in the cytoplasm. The enzyme catalyses 1-(5-phospho-beta-D-ribosyl)-5-[(5-phospho-beta-D-ribosylamino)methylideneamino]imidazole-4-carboxamide = 5-[(5-phospho-1-deoxy-D-ribulos-1-ylimino)methylamino]-1-(5-phospho-beta-D-ribosyl)imidazole-4-carboxamide. Its pathway is amino-acid biosynthesis; L-histidine biosynthesis; L-histidine from 5-phospho-alpha-D-ribose 1-diphosphate: step 4/9. The sequence is that of 1-(5-phosphoribosyl)-5-[(5-phosphoribosylamino)methylideneamino] imidazole-4-carboxamide isomerase from Haemophilus influenzae (strain 86-028NP).